Consider the following 72-residue polypeptide: uncharacterized protein (72 aa).

A helical transmembrane segment spans residues 23-45; it reads ITNLLITTILLCFFNATTYWKLF.

The protein resides in the membrane. This is an uncharacterized protein from Schizosaccharomyces pombe (strain 972 / ATCC 24843) (Fission yeast).